The chain runs to 424 residues: Enolase (424 aa).

Q162 is a binding site for (2R)-2-phosphoglycerate. E204 (proton donor) is an active-site residue. Residues D241, E284, and D311 each contribute to the Mg(2+) site. Residues K336, R365, S366, and K387 each contribute to the (2R)-2-phosphoglycerate site. K336 functions as the Proton acceptor in the catalytic mechanism.

Belongs to the enolase family. The cofactor is Mg(2+).

The protein localises to the cytoplasm. Its subcellular location is the secreted. The protein resides in the cell surface. It catalyses the reaction (2R)-2-phosphoglycerate = phosphoenolpyruvate + H2O. It participates in carbohydrate degradation; glycolysis; pyruvate from D-glyceraldehyde 3-phosphate: step 4/5. Its function is as follows. Catalyzes the reversible conversion of 2-phosphoglycerate (2-PG) into phosphoenolpyruvate (PEP). It is essential for the degradation of carbohydrates via glycolysis. The chain is Enolase from Parvibaculum lavamentivorans (strain DS-1 / DSM 13023 / NCIMB 13966).